Reading from the N-terminus, the 132-residue chain is NADPH-dependent 7-cyano-7-deazaguanine reductase (132 aa).

Residue cysteine 43 is the Thioimide intermediate of the active site. Catalysis depends on aspartate 50, which acts as the Proton donor. Substrate is bound by residues 65–67 (VEL) and 84–85 (HE).

The protein belongs to the GTP cyclohydrolase I family. QueF type 1 subfamily.

The protein localises to the cytoplasm. The catalysed reaction is 7-aminomethyl-7-carbaguanine + 2 NADP(+) = 7-cyano-7-deazaguanine + 2 NADPH + 3 H(+). The protein operates within tRNA modification; tRNA-queuosine biosynthesis. Its function is as follows. Catalyzes the NADPH-dependent reduction of 7-cyano-7-deazaguanine (preQ0) to 7-aminomethyl-7-deazaguanine (preQ1). This chain is NADPH-dependent 7-cyano-7-deazaguanine reductase, found in Thermosynechococcus vestitus (strain NIES-2133 / IAM M-273 / BP-1).